Consider the following 446-residue polypeptide: Argininosuccinate lyase (446 aa).

It belongs to the lyase 1 family. Argininosuccinate lyase subfamily.

The protein localises to the cytoplasm. The enzyme catalyses 2-(N(omega)-L-arginino)succinate = fumarate + L-arginine. Its pathway is amino-acid biosynthesis; L-arginine biosynthesis; L-arginine from L-ornithine and carbamoyl phosphate: step 3/3. The protein is Argininosuccinate lyase of Phocaeicola vulgatus (strain ATCC 8482 / DSM 1447 / JCM 5826 / CCUG 4940 / NBRC 14291 / NCTC 11154) (Bacteroides vulgatus).